A 69-amino-acid polypeptide reads, in one-letter code: Small, acid-soluble spore protein 1 (69 aa).

The protein belongs to the alpha/beta-type SASP family.

Functionally, SASP are bound to spore DNA. They are double-stranded DNA-binding proteins that cause DNA to change to an a-like conformation. They protect the DNA backbone from chemical and enzymatic cleavage and are thus involved in dormant spore's high resistance to UV light. In Sporosarcina ureae, this protein is Small, acid-soluble spore protein 1 (Su-1).